A 480-amino-acid chain; its full sequence is Chromosomal replication initiator protein DnaA (480 aa).

Residues 1–73 (MNQDFWPFCL…GELGEEFHGQ (73 aa)) are domain I, interacts with DnaA modulators. The segment at 73 to 143 (QPIQLELQLP…SANELAYDKT (71 aa)) is domain II. A domain III, AAA+ region region spans residues 144-360 (RLNADFTFDT…GALNKVVAYA (217 aa)). ATP-binding residues include glycine 188, glycine 190, lysine 191, and threonine 192. Positions 361-480 (RFHGRGISLE…VHVLTQVLRG (120 aa)) are domain IV, binds dsDNA.

The protein belongs to the DnaA family. In terms of assembly, oligomerizes as a right-handed, spiral filament on DNA at oriC.

Its subcellular location is the cytoplasm. In terms of biological role, plays an essential role in the initiation and regulation of chromosomal replication. ATP-DnaA binds to the origin of replication (oriC) to initiate formation of the DNA replication initiation complex once per cell cycle. Binds the DnaA box (a 9 base pair repeat at the origin) and separates the double-stranded (ds)DNA. Forms a right-handed helical filament on oriC DNA; dsDNA binds to the exterior of the filament while single-stranded (ss)DNA is stabiized in the filament's interior. The ATP-DnaA-oriC complex binds and stabilizes one strand of the AT-rich DNA unwinding element (DUE), permitting loading of DNA polymerase. After initiation quickly degrades to an ADP-DnaA complex that is not apt for DNA replication. Binds acidic phospholipids. The polypeptide is Chromosomal replication initiator protein DnaA (Azoarcus sp. (strain BH72)).